A 292-amino-acid polypeptide reads, in one-letter code: Tissue factor (292 aa).

An N-terminal signal peptide occupies residues 1 to 32 (MAPPTRLQVPRPGTAVPYTVLLGWLLAQVARA). Over 33–250 (ADTTGRAYNL…SREQGRAREM (218 aa)) the chain is Extracellular. Fibronectin type-III domains lie at 35 to 126 (TTGR…PFRN) and 148 to 240 (QVGT…TECT). An N-linked (GlcNAc...) asparagine glycan is attached at Asn41. 2 short sequence motifs (WKS motif) span residues 44–46 (WKS) and 75–77 (WKS). Residues Cys79 and Cys87 are joined by a disulfide bond. N-linked (GlcNAc...) asparagine glycans are attached at residues Asn114, Asn154, Asn167, and Asn182. The cysteines at positions 216 and 239 are disulfide-linked. The helical transmembrane segment at 251 to 271 (FFIIGAVVVVALLIIVLSVTV) threads the bilayer. Topologically, residues 272–292 (YKCRKARAGPSGKESSPLNIA) are cytoplasmic. A lipid anchor (S-palmitoyl cysteine) is attached at Cys274.

This sequence belongs to the tissue factor family. As to quaternary structure, interacts with HSPE; the interaction, inhibited by heparin, promotes the generation of activated factor X and activates coagulation in the presence of activated factor VII. In terms of tissue distribution, brain, heart.

Its subcellular location is the membrane. Functionally, initiates blood coagulation by forming a complex with circulating factor VII or VIIa. The [TF:VIIa] complex activates factors IX or X by specific limited proteolysis. TF plays a role in normal hemostasis by initiating the cell-surface assembly and propagation of the coagulation protease cascade. This is Tissue factor (F3) from Oryctolagus cuniculus (Rabbit).